Consider the following 90-residue polypeptide: Putative regulatory protein NT01CX_2250 (90 aa).

It belongs to the RemA family.

The sequence is that of Putative regulatory protein NT01CX_2250 from Clostridium novyi (strain NT).